A 122-amino-acid polypeptide reads, in one-letter code: Large ribosomal subunit protein uL14c (122 aa).

It belongs to the universal ribosomal protein uL14 family. Part of the 50S ribosomal subunit.

The protein localises to the plastid. Its function is as follows. Binds to 23S rRNA. This Helicosporidium sp. subsp. Simulium jonesii (Green alga) protein is Large ribosomal subunit protein uL14c (rpl14).